Here is a 207-residue protein sequence, read N- to C-terminus: Urease accessory protein UreG (207 aa).

Residue 13-20 (GPVGSGKT) participates in GTP binding.

It belongs to the SIMIBI class G3E GTPase family. UreG subfamily. In terms of assembly, homodimer. UreD, UreF and UreG form a complex that acts as a GTP-hydrolysis-dependent molecular chaperone, activating the urease apoprotein by helping to assemble the nickel containing metallocenter of UreC. The UreE protein probably delivers the nickel.

Its subcellular location is the cytoplasm. In terms of biological role, facilitates the functional incorporation of the urease nickel metallocenter. This process requires GTP hydrolysis, probably effectuated by UreG. This is Urease accessory protein UreG from Azoarcus sp. (strain BH72).